Reading from the N-terminus, the 98-residue chain is NADH-ubiquinone oxidoreductase chain 4L (98 aa).

3 consecutive transmembrane segments (helical) span residues Met1–Met21, Ala29–Leu49, and Ile61–Ile81.

It belongs to the complex I subunit 4L family. Core subunit of respiratory chain NADH dehydrogenase (Complex I) which is composed of 45 different subunits.

The protein resides in the mitochondrion inner membrane. The catalysed reaction is a ubiquinone + NADH + 5 H(+)(in) = a ubiquinol + NAD(+) + 4 H(+)(out). In terms of biological role, core subunit of the mitochondrial membrane respiratory chain NADH dehydrogenase (Complex I) which catalyzes electron transfer from NADH through the respiratory chain, using ubiquinone as an electron acceptor. Part of the enzyme membrane arm which is embedded in the lipid bilayer and involved in proton translocation. This Monodon monoceros (Narwhal) protein is NADH-ubiquinone oxidoreductase chain 4L (MT-ND4L).